Consider the following 217-residue polypeptide: Phosphoenolpyruvate guanylyltransferase (217 aa).

Phosphoenolpyruvate contacts are provided by T150, G165, and S168.

The protein belongs to the CofC family.

The catalysed reaction is phosphoenolpyruvate + GTP + H(+) = enolpyruvoyl-2-diphospho-5'-guanosine + diphosphate. It functions in the pathway cofactor biosynthesis; coenzyme F420 biosynthesis. Guanylyltransferase that catalyzes the activation of phosphoenolpyruvate (PEP) as enolpyruvoyl-2-diphospho-5'-guanosine, via the condensation of PEP with GTP. It is involved in the biosynthesis of coenzyme F420, a hydride carrier cofactor. The chain is Phosphoenolpyruvate guanylyltransferase from Mycobacterium ulcerans (strain Agy99).